The primary structure comprises 194 residues: Ribose 1,5-bisphosphate phosphokinase PhnN (194 aa).

24–31 lines the ATP pocket; it reads GPSGAGKD.

Belongs to the ribose 1,5-bisphosphokinase family.

It catalyses the reaction alpha-D-ribose 1,5-bisphosphate + ATP = 5-phospho-alpha-D-ribose 1-diphosphate + ADP. Its pathway is metabolic intermediate biosynthesis; 5-phospho-alpha-D-ribose 1-diphosphate biosynthesis; 5-phospho-alpha-D-ribose 1-diphosphate from D-ribose 5-phosphate (route II): step 3/3. Its function is as follows. Catalyzes the phosphorylation of ribose 1,5-bisphosphate to 5-phospho-D-ribosyl alpha-1-diphosphate (PRPP). The protein is Ribose 1,5-bisphosphate phosphokinase PhnN of Rhodopseudomonas palustris (strain ATCC BAA-98 / CGA009).